A 206-amino-acid chain; its full sequence is Large ribosomal subunit protein uL4 (206 aa).

Belongs to the universal ribosomal protein uL4 family. Part of the 50S ribosomal subunit.

Functionally, one of the primary rRNA binding proteins, this protein initially binds near the 5'-end of the 23S rRNA. It is important during the early stages of 50S assembly. It makes multiple contacts with different domains of the 23S rRNA in the assembled 50S subunit and ribosome. Forms part of the polypeptide exit tunnel. The protein is Large ribosomal subunit protein uL4 of Cereibacter sphaeroides (strain ATCC 17025 / ATH 2.4.3) (Rhodobacter sphaeroides).